A 404-amino-acid chain; its full sequence is Flavohemoprotein (404 aa).

Residues 1 to 138 (MLSEQTRSLV…LADTLIGIEN (138 aa)) form the Globin domain. His-85 contributes to the heme b binding site. Residues Tyr-95 and Glu-137 each act as charge relay system in the active site. The interval 149-404 (GGWSGWRPFR…EVFGSHPGDD (256 aa)) is reductase. One can recognise an FAD-binding FR-type domain in the interval 152–263 (SGWRPFRVAK…SAPQGDFFLH (112 aa)). FAD is bound by residues Tyr-190 and 206–209 (RQYS). 276 to 281 (GVGQTP) lines the NADP(+) pocket. 396–399 (VFGS) is a binding site for FAD.

It belongs to the globin family. Two-domain flavohemoproteins subfamily. The protein in the C-terminal section; belongs to the flavoprotein pyridine nucleotide cytochrome reductase family. Requires heme b as cofactor. FAD is required as a cofactor.

It carries out the reaction 2 nitric oxide + NADPH + 2 O2 = 2 nitrate + NADP(+) + H(+). The enzyme catalyses 2 nitric oxide + NADH + 2 O2 = 2 nitrate + NAD(+) + H(+). Functionally, is involved in NO detoxification in an aerobic process, termed nitric oxide dioxygenase (NOD) reaction that utilizes O(2) and NAD(P)H to convert NO to nitrate, which protects the bacterium from various noxious nitrogen compounds. Therefore, plays a central role in the inducible response to nitrosative stress. In Chromobacterium violaceum (strain ATCC 12472 / DSM 30191 / JCM 1249 / CCUG 213 / NBRC 12614 / NCIMB 9131 / NCTC 9757 / MK), this protein is Flavohemoprotein.